We begin with the raw amino-acid sequence, 249 residues long: Derlin-2.2 (249 aa).

The Cytoplasmic portion of the chain corresponds to 1–21 (MAQAVEEWYRQMPIITRSYLT). A helical transmembrane segment spans residues 22–42 (AAVVTTVGCTLEIISPYHLYL). Residues 43 to 96 (NPKLVVQHYEIWRLVTNFLYFRKMDLDFLFHMFFLARYCKLLEENSFRGRTADF) are Lumenal-facing. A helical transmembrane segment spans residues 97–117 (FYMLLFGATVLTGIVLIGGMI). Topologically, residues 118 to 122 (PYISE) are cytoplasmic. A helical transmembrane segment spans residues 123–143 (TFARILFLSNSLTFMMVYVWS). The Lumenal portion of the chain corresponds to 144–152 (KHNPFIHMS). The helical transmembrane segment at 153 to 173 (FLGLFTFTAAYLPWVLLGFSI) threads the bilayer. At 174–249 (LVGSSTWVDL…GAIGVDPQAQ (76 aa)) the chain is on the cytoplasmic side.

It belongs to the derlin family. As to expression, expressed in roots, stalks, leaves, immature ears, embryo and endosperm.

It localises to the endoplasmic reticulum membrane. May be involved in the degradation process of specific misfolded endoplasmic reticulum (ER) luminal proteins. The chain is Derlin-2.2 (DER2.2) from Zea mays (Maize).